Here is a 709-residue protein sequence, read N- to C-terminus: Solute carrier family 15 member 1 (709 aa).

The helical transmembrane segment at 1 to 21 (MGMSKSRGCFGYPLSIFFIVV) threads the bilayer. Over 22 to 53 (NEFCERFSYYGMRALLVLYFRNFLGWDDNLST) the chain is Extracellular. A glycan (N-linked (GlcNAc...) asparagine) is linked at asparagine 50. A helical transmembrane segment spans residues 54 to 74 (AIYHTFVALCYLTPILGALIA). Over 75 to 82 (DSWLGKFK) the chain is Cytoplasmic. The chain crosses the membrane as a helical span at residues 83–103 (TIVSLSIVYTIGQAVISVSSI). Residues 104 to 118 (NDLTDHDHNGSPDSL) are Extracellular-facing. A helical transmembrane segment spans residues 119-139 (PVHVALSMVGLALIALGTGGI). Over 140–161 (KPCVSAFGGDQFEEGQEKQRNR) the chain is Cytoplasmic. Residues 162-182 (FFSIFYLAINGGSLLSTIITP) form a helical membrane-spanning segment. The Extracellular portion of the chain corresponds to 183 to 198 (ILRVQQCGIHSQQACY). The helical transmembrane segment at 199-219 (PLAFGVPAALMAVALIVFVLG) threads the bilayer. Topologically, residues 220–276 (SGMYKKFQPQGNIMGKVAKCIGFAIKNRFRHRSKAYPKREHWLDWAKEKYDERLISQ) are cytoplasmic. Residues 277 to 297 (IKMVTKVMFLYIPLPMFWALF) traverse the membrane as a helical segment. At 298 to 327 (DQQGSRWTLQATTMNGKIGAIEIQPDQMQT) the chain is on the extracellular side. The chain crosses the membrane as a helical span at residues 328–348 (VNAILIVIMVPIVDAVVYPLI). The Cytoplasmic portion of the chain corresponds to 349-361 (AKCGFNFTSLKKM). A helical membrane pass occupies residues 362-382 (TVGMFLASMAFVVAAIVQVEI). Topologically, residues 383–585 (DKTLPVFPGG…PPNTVNMALQ (203 aa)) are extracellular. An extracellular domain (ECD) region spans residues 383-585 (DKTLPVFPGG…PPNTVNMALQ (203 aa)). Residues asparagine 406, asparagine 439, asparagine 515, and asparagine 532 are each glycosylated (N-linked (GlcNAc...) asparagine). A helical membrane pass occupies residues 586–606 (IPQYFLLTCGEVVFSVTGLEF). The Cytoplasmic segment spans residues 607–620 (SYSQAPSNMKSVLQ). The chain crosses the membrane as a helical span at residues 621–641 (AGWLLTVAVGNIIVLIVAGAG). Residues 642–646 (HFPKQ) lie on the Extracellular side of the membrane. A helical transmembrane segment spans residues 647 to 667 (WAEYILFASLLLVVCVIFAIM). Topologically, residues 668–709 (ARFYTYINPAEIEAQFDEDEKKKGIGKENPYSSLEPVSQTNM) are cytoplasmic. Residues 690-709 (KGIGKENPYSSLEPVSQTNM) form a disordered region. The span at 697 to 709 (PYSSLEPVSQTNM) shows a compositional bias: polar residues.

Belongs to the major facilitator superfamily. Proton-dependent oligopeptide transporter (POT/PTR) (TC 2.A.17) family. As to quaternary structure, interacts (via extracellular domain region) with trypsin.

The protein resides in the apical cell membrane. It catalyses the reaction a dipeptide(out) + H(+)(out) = a dipeptide(in) + H(+)(in). The catalysed reaction is an L-amino acid tripeptide(out) + H(+)(out) = an L-amino acid tripeptide(in) + H(+)(in). It carries out the reaction L-alanyl-L-lysine(out) + H(+)(out) = L-alanyl-L-lysine(in) + H(+)(in). The enzyme catalyses L-alanyl-L-proline(out) + H(+)(out) = L-alanyl-L-proline(in) + H(+)(in). It catalyses the reaction L-alanyl-L-valine(out) + H(+)(out) = L-alanyl-L-valine(in) + H(+)(in). The catalysed reaction is carnosine(out) + H(+)(out) = carnosine(in) + H(+)(in). It carries out the reaction glycyl-L-glutamine(out) + H(+)(out) = glycyl-L-glutamine(in) + H(+)(in). The enzyme catalyses glycyl-L-leucine(out) + H(+)(out) = glycyl-L-leucine(in) + H(+)(in). It catalyses the reaction glycyl-L-proline(out) + H(+)(out) = glycyl-L-proline(in) + H(+)(in). The catalysed reaction is glycyl-sarcosine(out) + H(+)(out) = glycyl-sarcosine(in) + H(+)(in). It carries out the reaction L-leucyl-L-leucine(out) + H(+)(out) = L-leucyl-L-leucine(in) + H(+)(in). The enzyme catalyses L-leucyl-L-proline(out) + H(+)(out) = L-leucyl-L-proline(in) + H(+)(in). It catalyses the reaction L-phenylalanyl-L-leucine(out) + H(+)(out) = L-phenylalanyl-L-leucine(in) + H(+)(in). The catalysed reaction is L-phenylalanyl-L-phenylalanine(out) + H(+)(out) = L-phenylalanyl-L-phenylalanine(in) + H(+)(in). It carries out the reaction L-lysyl-glycine(out) + H(+)(out) = L-lysyl-glycine(in) + H(+)(in). The enzyme catalyses L-tyrosylglycine(out) + H(+)(out) = L-tyrosylglycine(in) + H(+)(in). It catalyses the reaction L-alanyl-L-aspartate(out) + 2 H(+)(out) = L-alanyl-L-aspartate(in) + 2 H(+)(in). The catalysed reaction is L-aspartyl-glycine(out) + 2 H(+)(out) = L-aspartyl-glycine(in) + 2 H(+)(in). It carries out the reaction glycyl-L-aspartate(out) + 2 H(+)(out) = glycyl-L-aspartate(in) + 2 H(+)(in). The enzyme catalyses glycyl-L-glutamate(out) + 2 H(+)(out) = glycyl-L-glutamate(in) + 2 H(+)(in). It catalyses the reaction L-alanyl-L-leucyl-L-alanine(out) + H(+)(out) = L-alanyl-L-leucyl-L-alanine(in) + H(+)(in). The catalysed reaction is L-alanyl-L-prolylglycine(out) + H(+)(out) = L-alanyl-L-prolylglycine(in) + H(+)(in). It carries out the reaction glycylglycyl-L-isoleucine(out) + H(+)(out) = glycylglycyl-L-isoleucine(in) + H(+)(in). The enzyme catalyses glycylglycyl-L-proline(out) + H(+)(out) = glycylglycyl-L-proline(in) + H(+)(in). It catalyses the reaction L-methionyl-L-phenylalanyl-L-methionine(out) + H(+)(out) = L-methionyl-L-phenylalanyl-L-methionine(in) + H(+)(in). The catalysed reaction is N-acetyl-D-muramoyl-L-alanyl-D-isoglutamine(out) + 2 H(+)(out) = N-acetyl-D-muramoyl-L-alanyl-D-isoglutamine(in) + 2 H(+)(in). It carries out the reaction N(alpha)-formyl-L-methionyl-L-leucyl-L-phenylalanine(out) + 2 H(+)(out) = N(alpha)-formyl-L-methionyl-L-leucyl-L-phenylalanine(in) + 2 H(+)(in). Its function is as follows. Electrogenic proton-coupled amino-acid transporter that transports oligopeptides of 2 to 4 amino acids with a preference for dipeptides. Transports neutral and monovalently charged peptides with a proton to peptide stoichiometry of 1:1 or 2:1. Primarily responsible for the absorption of dietary di- and tripeptides from the small intestinal lumen. Mediates transepithelial transport of muramyl and N-formylated bacterial dipeptides contributing to recognition of pathogenic bacteria by the mucosal immune system. This chain is Solute carrier family 15 member 1, found in Mus musculus (Mouse).